Reading from the N-terminus, the 185-residue chain is Elongation factor P (185 aa).

The protein belongs to the elongation factor P family.

Its subcellular location is the cytoplasm. Its pathway is protein biosynthesis; polypeptide chain elongation. Involved in peptide bond synthesis. Stimulates efficient translation and peptide-bond synthesis on native or reconstituted 70S ribosomes in vitro. Probably functions indirectly by altering the affinity of the ribosome for aminoacyl-tRNA, thus increasing their reactivity as acceptors for peptidyl transferase. This chain is Elongation factor P (efp), found in Nostoc sp. (strain PCC 7120 / SAG 25.82 / UTEX 2576).